Here is a 327-residue protein sequence, read N- to C-terminus: MTALYPWLMPIYHQIAQTFDEGLGHHAVLIKADSGLGVESLFNALAQKIMCVAQGDKPCGQCHSCHLMQAHSHPDYHELSPINGKDIGVDQVRDINEMVAQHAQQNGNKVVYVQGAERLTEAAANALLKTLEEPRPNTYFLLQADSSASLLATIYSRCQVWNLSVPNEEIAFEWLKSKSAVENQEILTALAMNLGRPLLALETLQEGFIEQRKNFLRQFWVFYRRRSPLELLPLFDKERYVQQVDWILAFLSDCLKHKLEIDSHRQVADLGRGIEQFSDEQTALGLLQAIKIMQKVRSDLLTINGVNVELMLLDGLTRLVTEVFETQ.

In terms of assembly, DNA polymerase III contains a core (composed of alpha, epsilon and theta chains) that associates with a tau subunit. This core dimerizes to form the POLIII' complex. PolIII' associates with the gamma complex (composed of gamma, delta, delta', psi and chi chains) and with the beta chain to form the complete DNA polymerase III complex.

The enzyme catalyses DNA(n) + a 2'-deoxyribonucleoside 5'-triphosphate = DNA(n+1) + diphosphate. DNA polymerase III is a complex, multichain enzyme responsible for most of the replicative synthesis in bacteria. This DNA polymerase also exhibits 3' to 5' exonuclease activity. The chain is DNA polymerase III subunit delta' (holB) from Haemophilus influenzae (strain ATCC 51907 / DSM 11121 / KW20 / Rd).